A 113-amino-acid chain; its full sequence is Ribosome-binding factor A (113 aa).

The protein belongs to the RbfA family. As to quaternary structure, monomer. Binds 30S ribosomal subunits, but not 50S ribosomal subunits or 70S ribosomes.

It localises to the cytoplasm. Its function is as follows. One of several proteins that assist in the late maturation steps of the functional core of the 30S ribosomal subunit. Associates with free 30S ribosomal subunits (but not with 30S subunits that are part of 70S ribosomes or polysomes). Required for efficient processing of 16S rRNA. May interact with the 5'-terminal helix region of 16S rRNA. This is Ribosome-binding factor A from Lactococcus lactis subsp. cremoris (Streptococcus cremoris).